A 270-amino-acid polypeptide reads, in one-letter code: Formamidopyrimidine-DNA glycosylase (270 aa).

The active-site Schiff-base intermediate with DNA is the Pro2. The active-site Proton donor is Glu3. Lys56 functions as the Proton donor; for beta-elimination activity in the catalytic mechanism. Residues His89, Arg107, and Arg151 each coordinate DNA. The FPG-type zinc-finger motif lies at 236-270 (TVYGRAGEPCRVCATPIRLLRQGQRSTYYCPNCQK). The active-site Proton donor; for delta-elimination activity is the Arg260.

Belongs to the FPG family. Monomer. It depends on Zn(2+) as a cofactor.

It carries out the reaction Hydrolysis of DNA containing ring-opened 7-methylguanine residues, releasing 2,6-diamino-4-hydroxy-5-(N-methyl)formamidopyrimidine.. The catalysed reaction is 2'-deoxyribonucleotide-(2'-deoxyribose 5'-phosphate)-2'-deoxyribonucleotide-DNA = a 3'-end 2'-deoxyribonucleotide-(2,3-dehydro-2,3-deoxyribose 5'-phosphate)-DNA + a 5'-end 5'-phospho-2'-deoxyribonucleoside-DNA + H(+). Functionally, involved in base excision repair of DNA damaged by oxidation or by mutagenic agents. Acts as a DNA glycosylase that recognizes and removes damaged bases. Has a preference for oxidized purines, such as 7,8-dihydro-8-oxoguanine (8-oxoG). Has AP (apurinic/apyrimidinic) lyase activity and introduces nicks in the DNA strand. Cleaves the DNA backbone by beta-delta elimination to generate a single-strand break at the site of the removed base with both 3'- and 5'-phosphates. The protein is Formamidopyrimidine-DNA glycosylase of Variovorax paradoxus (strain S110).